A 330-amino-acid polypeptide reads, in one-letter code: L-tryptophan isonitrile synthase AmbI2 (330 aa).

The protein belongs to the isocyanide synthase family.

It carries out the reaction D-ribulose 5-phosphate + L-tryptophan = (2S)-3-(1H-indol-3-yl)-2-isocyanopropanoate + hydroxyacetone + formaldehyde + phosphate + H2O + H(+). Functionally, involved in the biosynthesis of ambiguines, a family of hapalindole-type alkaloids. Responsible for the synthesis of the isonitrile group on tryptophan using ribulose 5-phosphate as the source of the carbon atom. The chain is L-tryptophan isonitrile synthase AmbI2 from Fischerella ambigua (strain UTEX 1903).